Reading from the N-terminus, the 428-residue chain is Trigger factor (428 aa).

The 86-residue stretch at 163-248 (GDIVDIDFEG…VNDVKVKELP (86 aa)) folds into the PPIase FKBP-type domain.

The protein belongs to the FKBP-type PPIase family. Tig subfamily.

The protein localises to the cytoplasm. The enzyme catalyses [protein]-peptidylproline (omega=180) = [protein]-peptidylproline (omega=0). Its function is as follows. Involved in protein export. Acts as a chaperone by maintaining the newly synthesized protein in an open conformation. Functions as a peptidyl-prolyl cis-trans isomerase. In Acetivibrio thermocellus (strain ATCC 27405 / DSM 1237 / JCM 9322 / NBRC 103400 / NCIMB 10682 / NRRL B-4536 / VPI 7372) (Clostridium thermocellum), this protein is Trigger factor.